The chain runs to 153 residues: Ribonuclease K3 (153 aa).

A signal peptide spans 1-26 (MGPDLRCFPLLLLLLGLWWSVRPLCA). A glycan (N-linked (GlcNAc...) asparagine) is linked at asparagine 30. Histidine 41 acts as the Proton acceptor in catalysis. Cystine bridges form between cysteine 49–cysteine 107, cysteine 63–cysteine 117, cysteine 81–cysteine 132, and cysteine 88–cysteine 95. N-linked (GlcNAc...) asparagine glycosylation occurs at asparagine 58. 64–68 (KPQNT) provides a ligand contact to substrate. N-linked (GlcNAc...) asparagine glycosylation is present at asparagine 85. Lysine 89 serves as a coordination point for substrate. The Proton donor role is filled by histidine 148.

It belongs to the pancreatic ribonuclease family. In terms of assembly, interacts (via N-terminus) with bacterial lipopolysaccharide (LPS). As to expression, kidney.

Its subcellular location is the secreted. It localises to the lysosome. It is found in the cytoplasmic granule. Ribonuclease which shows a preference for the pyrimidines uridine and cytosine. Has potent antibacterial activity against a range of Gram-positive and Gram-negative bacteria, including P.aeruginosa, A.baumanii, M.luteus, S.aureus, E.faecalis, E.faecium, S.saprophyticus and E.coli. Causes loss of bacterial membrane integrity, and also promotes agglutination of Gram-negative bacteria. Probably contributes to urinary tract sterility. Bactericidal activity is independent of RNase activity. This chain is Ribonuclease K3 (RNASE6), found in Sus scrofa (Pig).